A 187-amino-acid polypeptide reads, in one-letter code: Peroxisome assembly protein 22 (187 aa).

The chain crosses the membrane as a helical span at residues 7–29; sequence NTFFGLAALGALGLGYSVYKSFI.

Belongs to the peroxin-22 family. In terms of assembly, interacts with PEX4.

The protein localises to the peroxisome membrane. Its function is as follows. Involved in peroxisome biogenesis. The sequence is that of Peroxisome assembly protein 22 (PEX22) from Komagataella pastoris (Yeast).